Here is an 844-residue protein sequence, read N- to C-terminus: Neuronal PAS domain-containing protein 4B (844 aa).

Positions 61 to 74 (KMYRSTKGASKARR) are basic motif; degenerate. Positions 61 to 114 (KMYRSTKGASKARRDQINAEIRSLKELLPISDADKARLSYLHIMSLACIYTRKS) constitute a bHLH domain. A helix-loop-helix motif region spans residues 75–114 (DQINAEIRSLKELLPISDADKARLSYLHIMSLACIYTRKS). PAS domains follow at residues 132-190 (SLPE…PVDH) and 294-343 (DMRI…LHNG). Residues 410–422 (SRQSSDPLSSPDQ) show a composition bias toward polar residues. Disordered stretches follow at residues 410-432 (SRQSSDPLSSPDQVFTPSSSGLS), 444-479 (GRSSSEELPGTSAPSSMTFDPLEGEEIDPQSHGGGH), 702-725 (PLPNLPSPSPVPPSPYSSVPSYSQ), and 757-784 (TEGGLQDGERPDEDMEMMSSQRSSEAPA). Over residues 704–716 (PNLPSPSPVPPSP) the composition is skewed to pro residues.

As to quaternary structure, efficient DNA binding requires dimerization with another bHLH protein.

The protein localises to the nucleus. Transcription factor expressed in neurons of the brain that regulates the excitatory-inhibitory balance within neural circuits and is required for contextual memory in the hippocampus. Plays a key role in the structural and functional plasticity of neurons. Acts as an early-response transcription factor in both excitatory and inhibitory neurons, where it induces distinct but overlapping sets of late-response genes in these two types of neurons, allowing the synapses that form on inhibitory and excitatory neurons to be modified by neuronal activity in a manner specific to their function within a circuit, thereby facilitating appropriate circuit responses to sensory experience. This Danio rerio (Zebrafish) protein is Neuronal PAS domain-containing protein 4B (npas4b).